Consider the following 156-residue polypeptide: Ribosomal RNA large subunit methyltransferase H (156 aa).

S-adenosyl-L-methionine-binding positions include L73, G104, and 123–128 (ISSMTL).

Belongs to the RNA methyltransferase RlmH family. As to quaternary structure, homodimer.

Its subcellular location is the cytoplasm. It carries out the reaction pseudouridine(1915) in 23S rRNA + S-adenosyl-L-methionine = N(3)-methylpseudouridine(1915) in 23S rRNA + S-adenosyl-L-homocysteine + H(+). Functionally, specifically methylates the pseudouridine at position 1915 (m3Psi1915) in 23S rRNA. The sequence is that of Ribosomal RNA large subunit methyltransferase H from Burkholderia vietnamiensis (strain G4 / LMG 22486) (Burkholderia cepacia (strain R1808)).